The sequence spans 274 residues: Undecaprenyl-diphosphatase (274 aa).

The next 7 membrane-spanning stretches (helical) occupy residues 21–39, 44–64, 85–105, 109–129, 185–205, 214–234, and 247–267; these read FLPISSTGHLILAGALLGF, AQVFDVAIQTGAILAVILVYW, FNLAIGFFPAVLLGLLFGKAI, LFTPVVVASTFIIGGLVILWA, ATDFSFFLAIPTLIGAGVYSL, VADLPMFLTGLVFSFLSAWLC, and FVPFAYYRIGFGLMVLVTAST.

It belongs to the UppP family.

The protein resides in the cell inner membrane. It catalyses the reaction di-trans,octa-cis-undecaprenyl diphosphate + H2O = di-trans,octa-cis-undecaprenyl phosphate + phosphate + H(+). Its function is as follows. Catalyzes the dephosphorylation of undecaprenyl diphosphate (UPP). Confers resistance to bacitracin. This is Undecaprenyl-diphosphatase from Verminephrobacter eiseniae (strain EF01-2).